The sequence spans 409 residues: Transcription termination factor 3, mitochondrial (409 aa).

The transit peptide at 1–64 (MALLAQQLSR…KTDRALFSWS (64 aa)) directs the protein to the mitochondrion. The disordered stretch occupies residues 74–93 (RKSSTNSTLLPSVSEQPEKI).

It belongs to the mTERF family.

The protein localises to the mitochondrion. Binds promoter DNA and regulates initiation of transcription. Required for normal mitochondrial transcription and translation, and for normal assembly of mitochondrial respiratory complexes. Required for normal mitochondrial function. Maintains 16S rRNA levels and functions in mitochondrial ribosome assembly by regulating the biogenesis of the 39S ribosomal subunit. The sequence is that of Transcription termination factor 3, mitochondrial (Mterf3) from Rattus norvegicus (Rat).